The primary structure comprises 180 residues: Small ribosomal subunit protein uS5 (180 aa).

In terms of domain architecture, S5 DRBM spans 24-87; it reads MIEKLVAVNR…EQARKNLATV (64 aa).

This sequence belongs to the universal ribosomal protein uS5 family. As to quaternary structure, part of the 30S ribosomal subunit. Contacts proteins S4 and S8.

Functionally, with S4 and S12 plays an important role in translational accuracy. In terms of biological role, located at the back of the 30S subunit body where it stabilizes the conformation of the head with respect to the body. This Xanthomonas axonopodis pv. citri (strain 306) protein is Small ribosomal subunit protein uS5.